Reading from the N-terminus, the 270-residue chain is Structure-specific endonuclease subunit SLX1 (270 aa).

Positions 9 to 94 (RFFGVYLLYC…PQASRRLTHV (86 aa)) constitute a GIY-YIG domain. Residues 182–234 (CSLCARLLQDEEGPLCCPHPGCPLRAHIICLAEEFLQEEPGQLLPLEGHCPSC) form an SLX1-type zinc finger.

Belongs to the SLX1 family. As to quaternary structure, forms a heterodimer with SLX4. A divalent metal cation is required as a cofactor. As to expression, expressed in testis, colon, bone marrow, brain, thymus and to a lesser extent in heart, kidney, skeletal muscle and spleen.

It localises to the nucleus. Functionally, catalytic subunit of the SLX1-SLX4 structure-specific endonuclease that resolves DNA secondary structures generated during DNA repair and recombination. Has endonuclease activity towards branched DNA substrates, introducing single-strand cuts in duplex DNA close to junctions with ss-DNA. Has a preference for 5'-flap structures, and promotes symmetrical cleavage of static and migrating Holliday junctions (HJs). Resolves HJs by generating two pairs of ligatable, nicked duplex products. This chain is Structure-specific endonuclease subunit SLX1 (Slx1b), found in Mus musculus (Mouse).